The following is a 45-amino-acid chain: Natriuretic peptide OsNP-d (45 aa).

Residues 1–5 (PAAGL) constitute a propeptide that is removed on maturation. A disulfide bridge links C14 with C30.

This sequence belongs to the natriuretic peptide family. Expressed by the venom gland.

Its subcellular location is the secreted. Snake venom natriuretic peptide that targets both NPR1 and NPR2. Exhibits hypotensive and vasodepressor activities. The chain is Natriuretic peptide OsNP-d from Oxyuranus scutellatus scutellatus (Australian taipan).